The sequence spans 231 residues: 7-cyano-7-deazaguanine synthase (231 aa).

An ATP-binding site is contributed by Phe-8–Leu-18. Residues Cys-188, Cys-197, Cys-200, and Cys-203 each contribute to the Zn(2+) site.

Belongs to the QueC family. It depends on Zn(2+) as a cofactor.

The enzyme catalyses 7-carboxy-7-deazaguanine + NH4(+) + ATP = 7-cyano-7-deazaguanine + ADP + phosphate + H2O + H(+). It functions in the pathway purine metabolism; 7-cyano-7-deazaguanine biosynthesis. Its function is as follows. Catalyzes the ATP-dependent conversion of 7-carboxy-7-deazaguanine (CDG) to 7-cyano-7-deazaguanine (preQ(0)). This is 7-cyano-7-deazaguanine synthase from Pectobacterium carotovorum subsp. carotovorum (strain PC1).